Consider the following 882-residue polypeptide: Dual specificity tyrosine-phosphorylation-regulated kinase mbk-1 (882 aa).

The span at 1–42 (MNTADVPDNLQSWGQQPSSSYSNTQQHSQMTNLPPINHNNLC) shows a compositional bias: polar residues. Disordered regions lie at residues 1–45 (MNTA…CDTE), 62–81 (QKQQ…AQRF), 212–239 (KQVR…ASLT), and 255–308 (NHYQ…NGYD). A compositionally biased stretch (low complexity) spans 64 to 79 (QQKQQEQQHIQQQNAQ). Positions 220 to 231 (KSQDAGKPKGSK) are enriched in basic and acidic residues. Residues 290-308 (QQQQRQKSSRGGPYNNGYD) show a composition bias toward low complexity. Positions 328–649 (ILSDTPVGKG…PYYVVRHPFL (322 aa)) constitute a Protein kinase domain. ATP-binding positions include 334-342 (VGKGSFGQV) and lysine 357. The active-site Proton acceptor is the aspartate 456. Disordered stretches follow at residues 742-761 (HNPN…QYQQ) and 789-882 (QQQQ…NNKL). Low complexity-rich tracts occupy residues 747 to 761 (QYSQ…QYQQ) and 789 to 810 (QQQQ…QHLQ). Residues 816-827 (RQQDQNEWRNQF) show a composition bias toward basic and acidic residues. Positions 843–869 (SVSNQISRNQFNPQQVSMTHGNVNANN) are enriched in polar residues.

Belongs to the protein kinase superfamily. CMGC Ser/Thr protein kinase family. MNB/DYRK subfamily. Requires Mg(2+) as cofactor. As to expression, expressed in all somatic cells.

The protein localises to the nucleus. The catalysed reaction is L-seryl-[protein] + ATP = O-phospho-L-seryl-[protein] + ADP + H(+). It carries out the reaction L-threonyl-[protein] + ATP = O-phospho-L-threonyl-[protein] + ADP + H(+). The enzyme catalyses L-tyrosyl-[protein] + ATP = O-phospho-L-tyrosyl-[protein] + ADP + H(+). Possible role in the function of olfactory neurons. The sequence is that of Dual specificity tyrosine-phosphorylation-regulated kinase mbk-1 from Caenorhabditis elegans.